Reading from the N-terminus, the 274-residue chain is 2,3,4,5-tetrahydropyridine-2,6-dicarboxylate N-succinyltransferase (274 aa).

Substrate is bound by residues Arg-104 and Asp-141.

Belongs to the transferase hexapeptide repeat family. Homotrimer.

Its subcellular location is the cytoplasm. The catalysed reaction is (S)-2,3,4,5-tetrahydrodipicolinate + succinyl-CoA + H2O = (S)-2-succinylamino-6-oxoheptanedioate + CoA. It participates in amino-acid biosynthesis; L-lysine biosynthesis via DAP pathway; LL-2,6-diaminopimelate from (S)-tetrahydrodipicolinate (succinylase route): step 1/3. This is 2,3,4,5-tetrahydropyridine-2,6-dicarboxylate N-succinyltransferase (dapD) from Escherichia coli O157:H7.